We begin with the raw amino-acid sequence, 498 residues long: Probable malate:quinone oxidoreductase 2 (498 aa).

Belongs to the MQO family. The cofactor is FAD.

It carries out the reaction (S)-malate + a quinone = a quinol + oxaloacetate. The protein operates within carbohydrate metabolism; tricarboxylic acid cycle; oxaloacetate from (S)-malate (quinone route): step 1/1. This chain is Probable malate:quinone oxidoreductase 2, found in Staphylococcus aureus (strain COL).